We begin with the raw amino-acid sequence, 1072 residues long: DNA-directed RNA polymerase subunit beta (1072 aa).

It belongs to the RNA polymerase beta chain family. As to quaternary structure, in plastids the minimal PEP RNA polymerase catalytic core is composed of four subunits: alpha, beta, beta', and beta''. When a (nuclear-encoded) sigma factor is associated with the core the holoenzyme is formed, which can initiate transcription.

It localises to the plastid. It is found in the chloroplast. The enzyme catalyses RNA(n) + a ribonucleoside 5'-triphosphate = RNA(n+1) + diphosphate. Its function is as follows. DNA-dependent RNA polymerase catalyzes the transcription of DNA into RNA using the four ribonucleoside triphosphates as substrates. The protein is DNA-directed RNA polymerase subunit beta of Arabidopsis thaliana (Mouse-ear cress).